We begin with the raw amino-acid sequence, 380 residues long: tRNA-specific 2-thiouridylase MnmA (380 aa).

ATP contacts are provided by residues 26–33 (AMSGGVDS) and leucine 52. Cysteine 120 (nucleophile) is an active-site residue. Cysteine 120 and cysteine 217 are disulfide-bonded. ATP is bound at residue glycine 144. The tract at residues 166–168 (RDQ) is interaction with tRNA. Cysteine 217 (cysteine persulfide intermediate) is an active-site residue.

It belongs to the MnmA/TRMU family.

It localises to the cytoplasm. The catalysed reaction is S-sulfanyl-L-cysteinyl-[protein] + uridine(34) in tRNA + AH2 + ATP = 2-thiouridine(34) in tRNA + L-cysteinyl-[protein] + A + AMP + diphosphate + H(+). Its function is as follows. Catalyzes the 2-thiolation of uridine at the wobble position (U34) of tRNA, leading to the formation of s(2)U34. This chain is tRNA-specific 2-thiouridylase MnmA, found in Roseobacter denitrificans (strain ATCC 33942 / OCh 114) (Erythrobacter sp. (strain OCh 114)).